The sequence spans 397 residues: Protein EMSY-LIKE 3 (397 aa).

The segment at 1-40 (MDYRPSDSSGTDDDLPPSHQGRYQRNARPTGNGRPSVLNS) is disordered. Positions 50 to 137 (METQIHLIEQ…PQLVHDAPSP (88 aa)) constitute an ENT domain. A coiled-coil region spans residues 81–107 (ESLITELRKELRVSDEEHRELLSRVNA). Disordered stretches follow at residues 122–221 (SLQS…SYDP) and 284–330 (DPGI…TQNG). Residues 164–174 (LHPSMQPSSSA) show a composition bias toward polar residues. Positions 175 to 182 (LRRGGPPP) match the Nuclear localization signal motif. The stretch at 363-389 (AEVEKAKRVLRDHELALMDAIAKLEEI) forms a coiled coil. The residue at position 390 (serine 390) is a Phosphoserine.

It is found in the nucleus. Its function is as follows. Probably involved in the regulation of chromatin states. Contributes to basal immunity. The sequence is that of Protein EMSY-LIKE 3 from Arabidopsis thaliana (Mouse-ear cress).